We begin with the raw amino-acid sequence, 177 residues long: ATP synthase subunit delta (177 aa).

This sequence belongs to the ATPase delta chain family. In terms of assembly, F-type ATPases have 2 components, F(1) - the catalytic core - and F(0) - the membrane proton channel. F(1) has five subunits: alpha(3), beta(3), gamma(1), delta(1), epsilon(1). F(0) has three main subunits: a(1), b(2) and c(10-14). The alpha and beta chains form an alternating ring which encloses part of the gamma chain. F(1) is attached to F(0) by a central stalk formed by the gamma and epsilon chains, while a peripheral stalk is formed by the delta and b chains.

Its subcellular location is the cell inner membrane. F(1)F(0) ATP synthase produces ATP from ADP in the presence of a proton or sodium gradient. F-type ATPases consist of two structural domains, F(1) containing the extramembraneous catalytic core and F(0) containing the membrane proton channel, linked together by a central stalk and a peripheral stalk. During catalysis, ATP synthesis in the catalytic domain of F(1) is coupled via a rotary mechanism of the central stalk subunits to proton translocation. Its function is as follows. This protein is part of the stalk that links CF(0) to CF(1). It either transmits conformational changes from CF(0) to CF(1) or is implicated in proton conduction. This is ATP synthase subunit delta from Aliivibrio fischeri (strain ATCC 700601 / ES114) (Vibrio fischeri).